A 171-amino-acid polypeptide reads, in one-letter code: MNKKNSYSYEDLLASGRGELFGEKGPQLPAPSMLMMDRVVEMNEEGGLFNKGYVEAELDINPSLSFFGCHFIGDPVMPGCLGLDAMWQLVGFYLGWIGGQGKGRALGVGEVKFTGQILPTAKKVIYRINMKRVINRKLVMGMADGEVEVDGKVIYTATDLKVGLFQDTSTF.

Residue His70 is part of the active site.

The protein belongs to the thioester dehydratase family. FabA subfamily. As to quaternary structure, homodimer.

The protein resides in the cytoplasm. The catalysed reaction is a (3R)-hydroxyacyl-[ACP] = a (2E)-enoyl-[ACP] + H2O. The enzyme catalyses (3R)-hydroxydecanoyl-[ACP] = (2E)-decenoyl-[ACP] + H2O. It catalyses the reaction (2E)-decenoyl-[ACP] = (3Z)-decenoyl-[ACP]. It functions in the pathway lipid metabolism; fatty acid biosynthesis. Its function is as follows. Necessary for the introduction of cis unsaturation into fatty acids. Catalyzes the dehydration of (3R)-3-hydroxydecanoyl-ACP to E-(2)-decenoyl-ACP and then its isomerization to Z-(3)-decenoyl-ACP. Can catalyze the dehydratase reaction for beta-hydroxyacyl-ACPs with saturated chain lengths up to 16:0, being most active on intermediate chain length. The polypeptide is 3-hydroxydecanoyl-[acyl-carrier-protein] dehydratase (Histophilus somni (strain 129Pt) (Haemophilus somnus)).